We begin with the raw amino-acid sequence, 246 residues long: tRNA pseudouridine synthase A (246 aa).

The active-site Nucleophile is D52. Y111 is a binding site for substrate.

Belongs to the tRNA pseudouridine synthase TruA family. Homodimer.

It carries out the reaction uridine(38/39/40) in tRNA = pseudouridine(38/39/40) in tRNA. Its function is as follows. Formation of pseudouridine at positions 38, 39 and 40 in the anticodon stem and loop of transfer RNAs. This is tRNA pseudouridine synthase A from Borrelia garinii subsp. bavariensis (strain ATCC BAA-2496 / DSM 23469 / PBi) (Borreliella bavariensis).